We begin with the raw amino-acid sequence, 194 residues long: Ras-like protein RAS1 (194 aa).

16–23 lines the GTP pocket; sequence GAGGVGKS. The Effector region motif lies at 38 to 46; it reads YDPTIEDSY. GTP-binding positions include 63-67 and 122-125; these read DTAGQ and NKVD. Cys191 carries the post-translational modification Cysteine methyl ester. The S-geranylgeranyl cysteine moiety is linked to residue Cys191. Residues 192–194 constitute a propeptide, removed in mature form; that stretch reads TLL.

Belongs to the small GTPase superfamily. Ras family.

The protein localises to the cell membrane. The catalysed reaction is GTP + H2O = GDP + phosphate + H(+). Its activity is regulated as follows. Alternates between an inactive form bound to GDP and an active form bound to GTP. Activated by a guanine nucleotide-exchange factor (GEF) and inactivated by a GTPase-activating protein (GAP). In terms of biological role, ras proteins bind GDP/GTP and possess intrinsic GTPase activity. The protein is Ras-like protein RAS1 (RAS1) of Hydra vulgaris (Hydra).